The chain runs to 335 residues: uncharacterized protein (335 aa).

This is an uncharacterized protein from Methanocaldococcus jannaschii (strain ATCC 43067 / DSM 2661 / JAL-1 / JCM 10045 / NBRC 100440) (Methanococcus jannaschii).